We begin with the raw amino-acid sequence, 348 residues long: Protein RecA (348 aa).

64–71 (GPESSGKT) is a binding site for ATP. Over residues 325–335 (YEIDGANKEPL) the composition is skewed to basic and acidic residues. Residues 325 to 348 (YEIDGANKEPLEETEETLSLLDDE) form a disordered region. The segment covering 336–348 (EETEETLSLLDDE) has biased composition (acidic residues).

It belongs to the RecA family.

The protein resides in the cytoplasm. Functionally, can catalyze the hydrolysis of ATP in the presence of single-stranded DNA, the ATP-dependent uptake of single-stranded DNA by duplex DNA, and the ATP-dependent hybridization of homologous single-stranded DNAs. It interacts with LexA causing its activation and leading to its autocatalytic cleavage. In Listeria welshimeri serovar 6b (strain ATCC 35897 / DSM 20650 / CCUG 15529 / CIP 8149 / NCTC 11857 / SLCC 5334 / V8), this protein is Protein RecA.